Here is a 162-residue protein sequence, read N- to C-terminus: Lipoprotein signal peptidase (162 aa).

The next 4 helical transmembrane spans lie at 9–29 (LCLV…LVAT), 39–59 (VIHG…FGLF), 66–86 (VRKF…LWLY), and 95–115 (VLSF…IDRF). Residues aspartate 122 and aspartate 140 contribute to the active site. The helical transmembrane segment at 136–156 (FNVADSAITIGMVVFVYHVIF) threads the bilayer.

The protein belongs to the peptidase A8 family.

The protein resides in the cell inner membrane. The enzyme catalyses Release of signal peptides from bacterial membrane prolipoproteins. Hydrolyzes -Xaa-Yaa-Zaa-|-(S,diacylglyceryl)Cys-, in which Xaa is hydrophobic (preferably Leu), and Yaa (Ala or Ser) and Zaa (Gly or Ala) have small, neutral side chains.. It functions in the pathway protein modification; lipoprotein biosynthesis (signal peptide cleavage). In terms of biological role, this protein specifically catalyzes the removal of signal peptides from prolipoproteins. This is Lipoprotein signal peptidase from Desulforapulum autotrophicum (strain ATCC 43914 / DSM 3382 / VKM B-1955 / HRM2) (Desulfobacterium autotrophicum).